The primary structure comprises 499 residues: uncharacterized protein (499 aa).

The RING-type; degenerate zinc finger occupies Cys10 to Arg57. The B box-type; degenerate zinc-finger motif lies at Asn101 to Ile147.

This is an uncharacterized protein from Caenorhabditis elegans.